The following is a 251-amino-acid chain: Ubiquinone/menaquinone biosynthesis C-methyltransferase UbiE (251 aa).

S-adenosyl-L-methionine is bound by residues threonine 74, aspartate 95, 123–124 (NA), and serine 140.

This sequence belongs to the class I-like SAM-binding methyltransferase superfamily. MenG/UbiE family.

The enzyme catalyses a 2-demethylmenaquinol + S-adenosyl-L-methionine = a menaquinol + S-adenosyl-L-homocysteine + H(+). It catalyses the reaction a 2-methoxy-6-(all-trans-polyprenyl)benzene-1,4-diol + S-adenosyl-L-methionine = a 5-methoxy-2-methyl-3-(all-trans-polyprenyl)benzene-1,4-diol + S-adenosyl-L-homocysteine + H(+). It participates in quinol/quinone metabolism; menaquinone biosynthesis; menaquinol from 1,4-dihydroxy-2-naphthoate: step 2/2. It functions in the pathway cofactor biosynthesis; ubiquinone biosynthesis. In terms of biological role, methyltransferase required for the conversion of demethylmenaquinol (DMKH2) to menaquinol (MKH2) and the conversion of 2-polyprenyl-6-methoxy-1,4-benzoquinol (DDMQH2) to 2-polyprenyl-3-methyl-6-methoxy-1,4-benzoquinol (DMQH2). The sequence is that of Ubiquinone/menaquinone biosynthesis C-methyltransferase UbiE from Yersinia enterocolitica serotype O:8 / biotype 1B (strain NCTC 13174 / 8081).